The following is a 72-amino-acid chain: uncharacterized protein (72 aa).

This is an uncharacterized protein from Vaccinia virus (strain Copenhagen) (VACV).